Consider the following 287-residue polypeptide: Ribosomal RNA small subunit methyltransferase A (287 aa).

The S-adenosyl-L-methionine site is built by asparagine 18, leucine 20, glycine 45, glutamate 66, aspartate 91, and asparagine 118.

It belongs to the class I-like SAM-binding methyltransferase superfamily. rRNA adenine N(6)-methyltransferase family. RsmA subfamily.

It localises to the cytoplasm. The catalysed reaction is adenosine(1518)/adenosine(1519) in 16S rRNA + 4 S-adenosyl-L-methionine = N(6)-dimethyladenosine(1518)/N(6)-dimethyladenosine(1519) in 16S rRNA + 4 S-adenosyl-L-homocysteine + 4 H(+). Its function is as follows. Specifically dimethylates two adjacent adenosines (A1518 and A1519) in the loop of a conserved hairpin near the 3'-end of 16S rRNA in the 30S particle. May play a critical role in biogenesis of 30S subunits. In Haemophilus influenzae (strain PittEE), this protein is Ribosomal RNA small subunit methyltransferase A.